The primary structure comprises 203 residues: Probable flagellin 1 (203 aa).

Residues methionine 1–glycine 6 constitute a propeptide that is removed on maturation.

This sequence belongs to the archaeal flagellin family.

It localises to the archaeal flagellum. In terms of biological role, flagellin is the subunit protein which polymerizes to form the filaments of archaeal flagella. This is Probable flagellin 1 (flaB1) from Aeropyrum pernix (strain ATCC 700893 / DSM 11879 / JCM 9820 / NBRC 100138 / K1).